A 265-amino-acid chain; its full sequence is Urease accessory protein UreH (265 aa).

The protein belongs to the UreD family. UreH, UreF and UreG form a complex that acts as a GTP-hydrolysis-dependent molecular chaperone, activating the urease apoprotein by helping to assemble the nickel containing metallocenter of UreC. The UreE protein probably delivers the nickel.

It is found in the cytoplasm. In terms of biological role, required for maturation of urease via the functional incorporation of the urease nickel metallocenter. This is Urease accessory protein UreH from Helicobacter pylori (strain HPAG1).